The chain runs to 252 residues: MPSTERVAKVVLVDIEGTTTSISFVHDVLFPYAKNNVQKFLEESWESSSEVKQIVRELQQVPQYAEYTATLRVPPKEVDVQVITGFVRYLIDKDLKVTPLKTLQGLIWQQGYETGELMGHVFNDVPGAFEAWREAGLRIAVYSSGSVAAQKLIFRYSIVGDLLTHLSAHFDTHVGHKQESQSYANIAQSLGEDPSHILFLTDIPGEAAAARSAGLQTIILQRPGNTPLTDDQKYSNELIADFSSLHTLQLPE.

Residues Asp14 and Glu16 each coordinate Mg(2+). Substrate-binding positions include 143–144 (SS) and Lys177. Asp202 contacts Mg(2+).

The protein belongs to the HAD-like hydrolase superfamily. MasA/MtnC family. In terms of assembly, monomer. Requires Mg(2+) as cofactor.

The protein localises to the cytoplasm. Its subcellular location is the nucleus. It catalyses the reaction 5-methylsulfanyl-2,3-dioxopentyl phosphate + H2O = 1,2-dihydroxy-5-(methylsulfanyl)pent-1-en-3-one + phosphate. The protein operates within amino-acid biosynthesis; L-methionine biosynthesis via salvage pathway; L-methionine from S-methyl-5-thio-alpha-D-ribose 1-phosphate: step 3/6. It functions in the pathway amino-acid biosynthesis; L-methionine biosynthesis via salvage pathway; L-methionine from S-methyl-5-thio-alpha-D-ribose 1-phosphate: step 4/6. Functionally, bifunctional enzyme that catalyzes the enolization of 2,3-diketo-5-methylthiopentyl-1-phosphate (DK-MTP-1-P) into the intermediate 2-hydroxy-3-keto-5-methylthiopentenyl-1-phosphate (HK-MTPenyl-1-P), which is then dephosphorylated to form the acireductone 1,2-dihydroxy-3-keto-5-methylthiopentene (DHK-MTPene). This Drosophila persimilis (Fruit fly) protein is Enolase-phosphatase E1.